The primary structure comprises 31 residues: Cyclotide cter-E (31 aa).

Positions 1 to 31 (GIPCAESCVWIPCTVTALLGCSCKDKVCYLD) form a cross-link, cyclopeptide (Gly-Asp). 3 cysteine pairs are disulfide-bonded: cysteine 4/cysteine 21, cysteine 8/cysteine 23, and cysteine 13/cysteine 28.

Post-translationally, contains 3 disulfide bonds. This is a cyclic peptide.

Functionally, probably participates in a plant defense mechanism. In Clitoria ternatea (Butterfly pea), this protein is Cyclotide cter-E.